A 259-amino-acid chain; its full sequence is Proteasome subunit alpha (259 aa).

Belongs to the peptidase T1A family. The 20S proteasome core is composed of 14 alpha and 14 beta subunits that assemble into four stacked heptameric rings, resulting in a barrel-shaped structure. The two inner rings, each composed of seven catalytic beta subunits, are sandwiched by two outer rings, each composed of seven alpha subunits. The catalytic chamber with the active sites is on the inside of the barrel. Has a gated structure, the ends of the cylinder being occluded by the N-termini of the alpha-subunits. Is capped at one or both ends by the proteasome regulatory ATPase, PAN.

It is found in the cytoplasm. Its activity is regulated as follows. The formation of the proteasomal ATPase PAN-20S proteasome complex, via the docking of the C-termini of PAN into the intersubunit pockets in the alpha-rings, triggers opening of the gate for substrate entry. Interconversion between the open-gate and close-gate conformations leads to a dynamic regulation of the 20S proteasome proteolysis activity. Component of the proteasome core, a large protease complex with broad specificity involved in protein degradation. This Methanococcus maripaludis (strain C5 / ATCC BAA-1333) protein is Proteasome subunit alpha.